A 638-amino-acid polypeptide reads, in one-letter code: Threonine--tRNA ligase (638 aa).

The TGS domain occupies 1–61; the sequence is MPVITLPDGS…SVDGKLQIIT (61 aa). The segment at 243-534 is catalytic; the sequence is DHRKIGKTQD…LTEEYAGFFP (292 aa). Zn(2+) is bound by residues Cys-334, His-385, and His-511.

The protein belongs to the class-II aminoacyl-tRNA synthetase family. Homodimer. It depends on Zn(2+) as a cofactor.

The protein resides in the cytoplasm. The enzyme catalyses tRNA(Thr) + L-threonine + ATP = L-threonyl-tRNA(Thr) + AMP + diphosphate + H(+). Catalyzes the attachment of threonine to tRNA(Thr) in a two-step reaction: L-threonine is first activated by ATP to form Thr-AMP and then transferred to the acceptor end of tRNA(Thr). Also edits incorrectly charged L-seryl-tRNA(Thr). The polypeptide is Threonine--tRNA ligase (Hamiltonella defensa subsp. Acyrthosiphon pisum (strain 5AT)).